The following is a 451-amino-acid chain: Tubulin alpha-1 chain (451 aa).

Glutamine 11 contacts GTP. Lysine 40 is subject to N6-acetyllysine. Residues glutamate 71, glycine 144, threonine 145, threonine 179, asparagine 206, and asparagine 228 each coordinate GTP. Glutamate 71 serves as a coordination point for Mg(2+). Glutamate 254 is a catalytic residue.

This sequence belongs to the tubulin family. Dimer of alpha and beta chains. A typical microtubule is a hollow water-filled tube with an outer diameter of 25 nm and an inner diameter of 15 nM. Alpha-beta heterodimers associate head-to-tail to form protofilaments running lengthwise along the microtubule wall with the beta-tubulin subunit facing the microtubule plus end conferring a structural polarity. Microtubules usually have 13 protofilaments but different protofilament numbers can be found in some organisms and specialized cells. Requires Mg(2+) as cofactor. In terms of processing, undergoes a tyrosination/detyrosination cycle, the cyclic removal and re-addition of a C-terminal tyrosine residue by the enzymes tubulin tyrosine carboxypeptidase (TTCP) and tubulin tyrosine ligase (TTL), respectively. Post-translationally, acetylation of alpha chains at Lys-40 stabilizes microtubules and affects affinity and processivity of microtubule motors. This modification has a role in multiple cellular functions, ranging from cell motility, cell cycle progression or cell differentiation to intracellular trafficking and signaling.

It is found in the cytoplasm. It localises to the cytoskeleton. The catalysed reaction is GTP + H2O = GDP + phosphate + H(+). Tubulin is the major constituent of microtubules, a cylinder consisting of laterally associated linear protofilaments composed of alpha- and beta-tubulin heterodimers. Microtubules grow by the addition of GTP-tubulin dimers to the microtubule end, where a stabilizing cap forms. Below the cap, tubulin dimers are in GDP-bound state, owing to GTPase activity of alpha-tubulin. This Zea mays (Maize) protein is Tubulin alpha-1 chain (TUBA1).